The chain runs to 119 residues: Holo-[acyl-carrier-protein] synthase (119 aa).

Mg(2+) contacts are provided by Asp-8 and Glu-60.

The protein belongs to the P-Pant transferase superfamily. AcpS family. It depends on Mg(2+) as a cofactor.

The protein localises to the cytoplasm. It carries out the reaction apo-[ACP] + CoA = holo-[ACP] + adenosine 3',5'-bisphosphate + H(+). Its function is as follows. Transfers the 4'-phosphopantetheine moiety from coenzyme A to a Ser of acyl-carrier-protein. In Staphylococcus haemolyticus (strain JCSC1435), this protein is Holo-[acyl-carrier-protein] synthase.